We begin with the raw amino-acid sequence, 158 residues long: Ribosomal RNA large subunit methyltransferase H (158 aa).

S-adenosyl-L-methionine contacts are provided by residues Leu-73, Gly-107, and 126-131; that span reads FGEITL.

The protein belongs to the RNA methyltransferase RlmH family. As to quaternary structure, homodimer.

Its subcellular location is the cytoplasm. It catalyses the reaction pseudouridine(1915) in 23S rRNA + S-adenosyl-L-methionine = N(3)-methylpseudouridine(1915) in 23S rRNA + S-adenosyl-L-homocysteine + H(+). In terms of biological role, specifically methylates the pseudouridine at position 1915 (m3Psi1915) in 23S rRNA. The chain is Ribosomal RNA large subunit methyltransferase H from Rubrobacter xylanophilus (strain DSM 9941 / JCM 11954 / NBRC 16129 / PRD-1).